Consider the following 272-residue polypeptide: Exosome complex component Rrp42 (272 aa).

Belongs to the RNase PH family. Rrp42 subfamily. As to quaternary structure, component of the archaeal exosome complex. Forms a hexameric ring-like arrangement composed of 3 Rrp41-Rrp42 heterodimers. The hexameric ring associates with a trimer of Rrp4 and/or Csl4 subunits.

Its subcellular location is the cytoplasm. In terms of biological role, non-catalytic component of the exosome, which is a complex involved in RNA degradation. Contributes to the structuring of the Rrp41 active site. This chain is Exosome complex component Rrp42, found in Thermococcus kodakarensis (strain ATCC BAA-918 / JCM 12380 / KOD1) (Pyrococcus kodakaraensis (strain KOD1)).